The chain runs to 139 residues: Transcription antitermination protein NusB (139 aa).

This sequence belongs to the NusB family.

Involved in transcription antitermination. Required for transcription of ribosomal RNA (rRNA) genes. Binds specifically to the boxA antiterminator sequence of the ribosomal RNA (rrn) operons. The protein is Transcription antitermination protein NusB of Escherichia coli (strain K12 / MC4100 / BW2952).